The following is a 204-amino-acid chain: bMERB domain-containing protein 1 (204 aa).

The bMERB domain maps to 3-150 (LKQSLSTHLE…EQEEDKEMAD (148 aa)). A disordered region spans residues 162-187 (VTKSPASSRAEKKAEPPPSKPTVAKT).

The protein is bMERB domain-containing protein 1 of Homo sapiens (Human).